The primary structure comprises 566 residues: Urease subunit beta (566 aa).

The Urease domain maps to 129–566 (GGIDTHIHFI…VPMARRYFMF (438 aa)). Ni(2+) contacts are provided by H134, H136, and K217. K217 bears the N6-carboxylysine mark. H219 is a binding site for substrate. Residues H246 and H272 each coordinate Ni(2+). H320 serves as the catalytic Proton donor. D360 serves as a coordination point for Ni(2+).

Belongs to the metallo-dependent hydrolases superfamily. Urease alpha subunit family. In terms of assembly, heterohexamer of 3 UreA (alpha) and 3 UreB (beta) subunits. It depends on Ni cation as a cofactor. Carboxylation allows a single lysine to coordinate two nickel ions.

It is found in the cytoplasm. It carries out the reaction urea + 2 H2O + H(+) = hydrogencarbonate + 2 NH4(+). It functions in the pathway nitrogen metabolism; urea degradation; CO(2) and NH(3) from urea (urease route): step 1/1. The protein is Urease subunit beta of Aliarcobacter butzleri (strain RM4018) (Arcobacter butzleri).